The sequence spans 212 residues: uncharacterized protein (212 aa).

3 Pentapeptide repeat domains span residues 63–102 (VSFR…KMVG), 103–142 (MNVA…ALMQ), and 143–182 (SECS…RFEQ).

This is an uncharacterized protein from Bacillus subtilis (strain 168).